A 373-amino-acid chain; its full sequence is 2-phosphonomethylmalate synthase (373 aa).

The 252-residue stretch at 5-256 folds into the Pyruvate carboxyltransferase domain; the sequence is LVLEDTTLRD…DLGIDLTKLK (252 aa).

The protein belongs to the alpha-IPM synthase/homocitrate synthase family.

The catalysed reaction is 3-phosphonopyruvate + acetyl-CoA + H2O = (R)-2-(phosphonomethyl)malate + CoA + H(+). It functions in the pathway antibiotic biosynthesis. Its function is as follows. Acyltransferase involved in the biosynthesis of the phosphonate antibiotic FR-900098, a potent antimalarial agent that acts as an inhibitor of 1-deoxy-D-xylulose 5-phosphate reductoisomerase (DXR), the first enzyme in the nonmevalonate pathway for isoprenoid biosynthesis. Catalyzes the condensation between acetyl-CoA and phosphonopyruvate to yield (R)-2-(phosphonomethyl)malate. The chain is 2-phosphonomethylmalate synthase from Streptomyces rubellomurinus (strain ATCC 31215).